We begin with the raw amino-acid sequence, 491 residues long: Ketol-acid reductoisomerase (NADP(+)) (491 aa).

The KARI N-terminal Rossmann domain occupies 15–208 (AQLGKCRFMG…GGHRAGVLES (194 aa)). NADP(+) contacts are provided by residues 45-48 (CGAQ), R68, R76, S78, and 108-110 (DKQ). The active site involves H132. Residue G158 participates in NADP(+) binding. KARI C-terminal knotted domains lie at 209–344 (SFVA…TAPQ) and 345–484 (FEGK…MTDM). Mg(2+) contacts are provided by D217, E221, E389, and E393. Substrate is bound at residue S414.

This sequence belongs to the ketol-acid reductoisomerase family. Mg(2+) is required as a cofactor.

It carries out the reaction (2R)-2,3-dihydroxy-3-methylbutanoate + NADP(+) = (2S)-2-acetolactate + NADPH + H(+). The catalysed reaction is (2R,3R)-2,3-dihydroxy-3-methylpentanoate + NADP(+) = (S)-2-ethyl-2-hydroxy-3-oxobutanoate + NADPH + H(+). The protein operates within amino-acid biosynthesis; L-isoleucine biosynthesis; L-isoleucine from 2-oxobutanoate: step 2/4. It functions in the pathway amino-acid biosynthesis; L-valine biosynthesis; L-valine from pyruvate: step 2/4. Functionally, involved in the biosynthesis of branched-chain amino acids (BCAA). Catalyzes an alkyl-migration followed by a ketol-acid reduction of (S)-2-acetolactate (S2AL) to yield (R)-2,3-dihydroxy-isovalerate. In the isomerase reaction, S2AL is rearranged via a Mg-dependent methyl migration to produce 3-hydroxy-3-methyl-2-ketobutyrate (HMKB). In the reductase reaction, this 2-ketoacid undergoes a metal-dependent reduction by NADPH to yield (R)-2,3-dihydroxy-isovalerate. This is Ketol-acid reductoisomerase (NADP(+)) from Salmonella schwarzengrund (strain CVM19633).